A 152-amino-acid chain; its full sequence is MALNQLSLSLQFARFPGVEAHRAALPRHAVVRWIRHALSLDAEITVRIVDAEEGQALNREYRHKDYATNVLTFDYAQEPVVMADLVLCAPVVEREAREQNKALHEHYAHLLVHGTLHAQGWDHETSAEDADEMEAYETAIMQELGFADPYAD.

Histidine 113, histidine 117, and histidine 123 together coordinate Zn(2+).

The protein belongs to the endoribonuclease YbeY family. Zn(2+) is required as a cofactor.

The protein localises to the cytoplasm. Single strand-specific metallo-endoribonuclease involved in late-stage 70S ribosome quality control and in maturation of the 3' terminus of the 16S rRNA. The sequence is that of Endoribonuclease YbeY from Paracidovorax citrulli (strain AAC00-1) (Acidovorax citrulli).